The primary structure comprises 351 residues: Fe(3+) ions import ATP-binding protein FbpC (351 aa).

Residues 7-241 (LTVKNLNKFF…PNHLETAKFM (235 aa)) enclose the ABC transporter domain. Position 39 to 46 (39 to 46 (GASGCGKT)) interacts with ATP.

The protein belongs to the ABC transporter superfamily. Fe(3+) ion importer (TC 3.A.1.10) family. In terms of assembly, the complex is composed of two ATP-binding proteins (FbpC), two transmembrane proteins (FbpB) and a solute-binding protein (FbpA).

The protein resides in the cell inner membrane. The enzyme catalyses Fe(3+)(out) + ATP + H2O = Fe(3+)(in) + ADP + phosphate + H(+). In terms of biological role, part of the ABC transporter complex FbpABC involved in Fe(3+) ions import. Responsible for energy coupling to the transport system. This chain is Fe(3+) ions import ATP-binding protein FbpC, found in Haemophilus influenzae (strain 86-028NP).